The sequence spans 519 residues: Sorting nexin-2 (519 aa).

2 disordered regions span residues M1–E20 and S30–V103. 2 stretches are compositionally biased toward low complexity: residues S30 to P44 and S93 to V103. S97 bears the Phosphoserine mark. 2 positions are modified to phosphothreonine: T101 and T104. Residues S117 and S119 each carry the phosphoserine modification. The PX domain maps to F140–R269. Residues R183, S185, K211, and R235 each coordinate a 1,2-diacyl-sn-glycero-3-phospho-(1D-myo-inositol-3-phosphate). S185 carries the post-translational modification Phosphoserine. An interaction with RhoG region spans residues Q260–A519. Phosphoserine is present on S277. Residues G278–M295 are membrane-binding amphipathic helix. Positions M299 to A519 constitute a BAR domain. K469 is modified (N6-acetyllysine).

Belongs to the sorting nexin family. In terms of assembly, predominantly forms heterodimers with BAR domain-containing sorting nexins SNX5, SNX6 and SNX32; can self-associate to form homodimers. The heterodimers are proposed to self-assemble into helical arrays on the membrane to stabilize and expand local membrane curvature underlying endosomal tubule formation. Thought to be a component of the originally described retromer complex (also called SNX-BAR retromer) which is a pentamer containing the heterotrimeric retromer cargo-selective complex (CSC), also decribed as vacuolar protein sorting subcomplex (VPS) and a heterodimeric membrane-deforming subcomplex formed between SNX1 or SNX2 and SNX5 or SNX6 (also called SNX-BAR subcomplex); the respective CSC and SNX-BAR subcomplexes associate with low affinity. Interacts with SNX5, SNX6, SNX32, VPS26A, VPS29, VPS35, FNBP1, KALRN, RHOG (GDP-bound form).

The protein localises to the early endosome membrane. The protein resides in the cell projection. It is found in the lamellipodium. In terms of biological role, involved in several stages of intracellular trafficking. Interacts with membranes containing phosphatidylinositol 3-phosphate (PtdIns(3P)) or phosphatidylinositol 3,5-bisphosphate (PtdIns(3,5)P2). Acts in part as component of the retromer membrane-deforming SNX-BAR subcomplex. The SNX-BAR retromer mediates retrograde transport of cargo proteins from endosomes to the trans-Golgi network (TGN) and is involved in endosome-to-plasma membrane transport for cargo protein recycling. The SNX-BAR subcomplex functions to deform the donor membrane into a tubular profile called endosome-to-TGN transport carrier (ETC). Can sense membrane curvature and has in vitro vesicle-to-membrane remodeling activity. Required for retrograde endosome-to-TGN transport of TGN38. Promotes KALRN- and RHOG-dependent but retromer-independent membrane remodeling such as lamellipodium formation; the function is dependent on GEF activity of KALRN. The sequence is that of Sorting nexin-2 (SNX2) from Bos taurus (Bovine).